Consider the following 207-residue polypeptide: Protein ERP4 (207 aa).

The signal sequence occupies residues 1–21; the sequence is MRVFTLIAILFSSSLLTHAFS. The Lumenal segment spans residues 22–174; the sequence is SNYAPVGISL…TVSSTESRLT (153 aa). In terms of domain architecture, GOLD spans 36–118; sequence KECLYYDLSS…PKKVEITLEK (83 aa). Residues 175-195 form a helical membrane-spanning segment; the sequence is WLSLLIMGVMVGISIVQALII. Residues 196–207 are Cytoplasmic-facing; it reads QFFFTSRQKNYV.

It belongs to the EMP24/GP25L family.

The protein resides in the endoplasmic reticulum membrane. Functionally, involved in vesicular protein trafficking. In Saccharomyces cerevisiae (strain ATCC 204508 / S288c) (Baker's yeast), this protein is Protein ERP4 (ERP4).